Reading from the N-terminus, the 301-residue chain is Phosphatidylglycerol--prolipoprotein diacylglyceryl transferase (301 aa).

Transmembrane regions (helical) follow at residues 10-30 (IAFSLGPVKVHWYGLMYLAGF), 57-77 (LLFYAMMGVVLGGRVGYMLFY), 92-112 (VWEGGMSFHGGLIGVLLAVAW), and 119-139 (MHMFDVVDFCAPLVPVGLGFG). Residue Arg-140 participates in a 1,2-diacyl-sn-glycero-3-phospho-(1'-sn-glycerol) binding. 3 consecutive transmembrane segments (helical) span residues 202-222 (PSQLYEAFLEGLVMFIVLWLF), 230-250 (YAVSGLFALLYGVFRFLVEFV), and 264-284 (LTRGQILSLPLIVIGLFLFWL).

It belongs to the Lgt family.

The protein resides in the cell inner membrane. The enzyme catalyses L-cysteinyl-[prolipoprotein] + a 1,2-diacyl-sn-glycero-3-phospho-(1'-sn-glycerol) = an S-1,2-diacyl-sn-glyceryl-L-cysteinyl-[prolipoprotein] + sn-glycerol 1-phosphate + H(+). The protein operates within protein modification; lipoprotein biosynthesis (diacylglyceryl transfer). Its function is as follows. Catalyzes the transfer of the diacylglyceryl group from phosphatidylglycerol to the sulfhydryl group of the N-terminal cysteine of a prolipoprotein, the first step in the formation of mature lipoproteins. The protein is Phosphatidylglycerol--prolipoprotein diacylglyceryl transferase of Xylella fastidiosa (strain M12).